A 362-amino-acid chain; its full sequence is Beta-ketoacyl-[acyl-carrier-protein] synthase III 2 (362 aa).

Catalysis depends on residues Cys113 and His251. The interval 252-256 (QANIR) is ACP-binding. Asn281 is an active-site residue.

It belongs to the thiolase-like superfamily. FabH family. Homodimer.

The protein localises to the cytoplasm. The enzyme catalyses malonyl-[ACP] + acetyl-CoA + H(+) = 3-oxobutanoyl-[ACP] + CO2 + CoA. Its pathway is lipid metabolism; fatty acid biosynthesis. Its function is as follows. Catalyzes the condensation reaction of fatty acid synthesis by the addition to an acyl acceptor of two carbons from malonyl-ACP. Catalyzes the first condensation reaction which initiates fatty acid synthesis and may therefore play a role in governing the total rate of fatty acid production. Possesses both acetoacetyl-ACP synthase and acetyl transacylase activities. Its substrate specificity determines the biosynthesis of branched-chain and/or straight-chain of fatty acids. This Vibrio vulnificus (strain YJ016) protein is Beta-ketoacyl-[acyl-carrier-protein] synthase III 2.